We begin with the raw amino-acid sequence, 232 residues long: 2,3,4,5-tetrahydropyridine-2,6-dicarboxylate N-acetyltransferase (232 aa).

Belongs to the transferase hexapeptide repeat family. DapH subfamily.

It catalyses the reaction (S)-2,3,4,5-tetrahydrodipicolinate + acetyl-CoA + H2O = L-2-acetamido-6-oxoheptanedioate + CoA. The protein operates within amino-acid biosynthesis; L-lysine biosynthesis via DAP pathway; LL-2,6-diaminopimelate from (S)-tetrahydrodipicolinate (acetylase route): step 1/3. Functionally, catalyzes the transfer of an acetyl group from acetyl-CoA to tetrahydrodipicolinate. The chain is 2,3,4,5-tetrahydropyridine-2,6-dicarboxylate N-acetyltransferase from Streptococcus uberis (strain ATCC BAA-854 / 0140J).